Reading from the N-terminus, the 79-residue chain is Small ribosomal subunit protein bS18 (79 aa).

It belongs to the bacterial ribosomal protein bS18 family. Part of the 30S ribosomal subunit. Forms a tight heterodimer with protein bS6.

Binds as a heterodimer with protein bS6 to the central domain of the 16S rRNA, where it helps stabilize the platform of the 30S subunit. In Bacillus velezensis (strain DSM 23117 / BGSC 10A6 / LMG 26770 / FZB42) (Bacillus amyloliquefaciens subsp. plantarum), this protein is Small ribosomal subunit protein bS18.